A 191-amino-acid polypeptide reads, in one-letter code: Protein Ves (191 aa).

This sequence belongs to the Ves family.

The chain is Protein Ves from Escherichia coli O8 (strain IAI1).